The chain runs to 507 residues: ATP synthase subunit alpha, chloroplastic (507 aa).

Residue 170 to 177 (GDRQTGKT) coordinates ATP. T257 bears the Phosphothreonine mark.

The protein belongs to the ATPase alpha/beta chains family. In terms of assembly, F-type ATPases have 2 components, CF(1) - the catalytic core - and CF(0) - the membrane proton channel. CF(1) has five subunits: alpha(3), beta(3), gamma(1), delta(1), epsilon(1). CF(0) has four main subunits: a, b, b' and c.

It localises to the plastid. The protein resides in the chloroplast thylakoid membrane. It catalyses the reaction ATP + H2O + 4 H(+)(in) = ADP + phosphate + 5 H(+)(out). Its function is as follows. Produces ATP from ADP in the presence of a proton gradient across the membrane. The alpha chain is a regulatory subunit. The chain is ATP synthase subunit alpha, chloroplastic from Barbarea verna (Land cress).